Consider the following 319-residue polypeptide: Putative metal ion transporter YfjQ (319 aa).

Helical transmembrane passes span I254–V274 and G290–V310.

It belongs to the CorA metal ion transporter (MIT) (TC 1.A.35) family.

The protein resides in the cell membrane. In Bacillus subtilis (strain 168), this protein is Putative metal ion transporter YfjQ (yfjQ).